The sequence spans 352 residues: tRNA pseudouridine synthase D (352 aa).

Asp-81 serves as the catalytic Nucleophile. The TRUD domain maps to 157–303 (GIPNYFGVQR…MEHERRILRL (147 aa)).

This sequence belongs to the pseudouridine synthase TruD family.

The enzyme catalyses uridine(13) in tRNA = pseudouridine(13) in tRNA. Functionally, responsible for synthesis of pseudouridine from uracil-13 in transfer RNAs. The chain is tRNA pseudouridine synthase D from Pseudomonas syringae pv. tomato (strain ATCC BAA-871 / DC3000).